The sequence spans 146 residues: 3-hydroxyacyl-[acyl-carrier-protein] dehydratase FabZ (146 aa).

Residue His48 is part of the active site.

This sequence belongs to the thioester dehydratase family. FabZ subfamily.

It is found in the cytoplasm. It carries out the reaction a (3R)-hydroxyacyl-[ACP] = a (2E)-enoyl-[ACP] + H2O. In terms of biological role, involved in unsaturated fatty acids biosynthesis. Catalyzes the dehydration of short chain beta-hydroxyacyl-ACPs and long chain saturated and unsaturated beta-hydroxyacyl-ACPs. The sequence is that of 3-hydroxyacyl-[acyl-carrier-protein] dehydratase FabZ from Acetivibrio thermocellus (strain ATCC 27405 / DSM 1237 / JCM 9322 / NBRC 103400 / NCIMB 10682 / NRRL B-4536 / VPI 7372) (Clostridium thermocellum).